The sequence spans 43 residues: Protein PsbN (43 aa).

Residues 7 to 27 form a helical membrane-spanning segment; that stretch reads LSIAIGSILLVITGFAIYTAF.

This sequence belongs to the PsbN family.

It is found in the cellular thylakoid membrane. May play a role in photosystem I and II biogenesis. The sequence is that of Protein PsbN from Crocosphaera subtropica (strain ATCC 51142 / BH68) (Cyanothece sp. (strain ATCC 51142)).